Here is a 244-residue protein sequence, read N- to C-terminus: tRNA pseudouridine synthase A (244 aa).

The active-site Nucleophile is Asp52. Tyr110 lines the substrate pocket.

The protein belongs to the tRNA pseudouridine synthase TruA family. In terms of assembly, homodimer.

The enzyme catalyses uridine(38/39/40) in tRNA = pseudouridine(38/39/40) in tRNA. Formation of pseudouridine at positions 38, 39 and 40 in the anticodon stem and loop of transfer RNAs. This chain is tRNA pseudouridine synthase A, found in Geobacter sulfurreducens (strain ATCC 51573 / DSM 12127 / PCA).